Here is a 291-residue protein sequence, read N- to C-terminus: Porphobilinogen deaminase (291 aa).

At cysteine 238 the chain carries S-(dipyrrolylmethanemethyl)cysteine.

The protein belongs to the HMBS family. As to quaternary structure, monomer. The cofactor is dipyrromethane.

The catalysed reaction is 4 porphobilinogen + H2O = hydroxymethylbilane + 4 NH4(+). Its pathway is porphyrin-containing compound metabolism; protoporphyrin-IX biosynthesis; coproporphyrinogen-III from 5-aminolevulinate: step 2/4. In terms of biological role, tetrapolymerization of the monopyrrole PBG into the hydroxymethylbilane pre-uroporphyrinogen in several discrete steps. The chain is Porphobilinogen deaminase from Clostridium beijerinckii (strain ATCC 51743 / NCIMB 8052) (Clostridium acetobutylicum).